Consider the following 877-residue polypeptide: Bifunctional uridylyltransferase/uridylyl-removing enzyme (877 aa).

A uridylyltransferase region spans residues 1–335; sequence MDGPNSDRAH…HRDDAFSPTP (335 aa). The tract at residues 336–695 is uridylyl-removing; that stretch reads VNDHFQAVND…LRPESLRGSV (360 aa). The HD domain occupies 454 to 576; it reads VDEHTLFVVR…VRNQNTLNHL (123 aa). ACT domains are found at residues 696–778 and 805–877; these read EVFI…AVSR and ILEL…VGDQ.

It belongs to the GlnD family. Mg(2+) is required as a cofactor.

The catalysed reaction is [protein-PII]-L-tyrosine + UTP = [protein-PII]-uridylyl-L-tyrosine + diphosphate. It catalyses the reaction [protein-PII]-uridylyl-L-tyrosine + H2O = [protein-PII]-L-tyrosine + UMP + H(+). With respect to regulation, uridylyltransferase (UTase) activity is inhibited by glutamine, while glutamine activates uridylyl-removing (UR) activity. In terms of biological role, modifies, by uridylylation and deuridylylation, the PII regulatory proteins (GlnB and homologs), in response to the nitrogen status of the cell that GlnD senses through the glutamine level. Under low glutamine levels, catalyzes the conversion of the PII proteins and UTP to PII-UMP and PPi, while under higher glutamine levels, GlnD hydrolyzes PII-UMP to PII and UMP (deuridylylation). Thus, controls uridylylation state and activity of the PII proteins, and plays an important role in the regulation of nitrogen fixation and metabolism. This Methylococcus capsulatus (strain ATCC 33009 / NCIMB 11132 / Bath) protein is Bifunctional uridylyltransferase/uridylyl-removing enzyme.